The sequence spans 579 residues: Nuclear hormone receptor family member nhr-71 (579 aa).

Positions 8 to 83 (SQECMVCSAP…AGMKIGAVQP (76 aa)) form a DNA-binding region, nuclear receptor. 2 consecutive NR C4-type zinc fingers follow at residues 11-31 (CMVCSAPADGLHYGAISCRSC) and 47-71 (CKHTNTCLIDPDGRCACRSCRFTKC). Disordered regions lie at residues 82-124 (QPRR…SDGP) and 168-189 (EPIPSTSSAPEKQSCQSSPNDD). Polar residues-rich tracts occupy residues 106-124 (SMNNSPLERNGNSFSSDGP) and 171-186 (PSTSSAPEKQSCQSSP). The NR LBD domain maps to 189 to 452 (DEQQEFNHLV…KFWYETLCYA (264 aa)).

It belongs to the nuclear hormone receptor family.

It is found in the nucleus. Orphan nuclear receptor. The sequence is that of Nuclear hormone receptor family member nhr-71 (nhr-71) from Caenorhabditis elegans.